Here is a 352-residue protein sequence, read N- to C-terminus: Histidinol-phosphate aminotransferase (352 aa).

Position 210 is an N6-(pyridoxal phosphate)lysine (Lys210).

The protein belongs to the class-II pyridoxal-phosphate-dependent aminotransferase family. Histidinol-phosphate aminotransferase subfamily. As to quaternary structure, homodimer. It depends on pyridoxal 5'-phosphate as a cofactor.

It carries out the reaction L-histidinol phosphate + 2-oxoglutarate = 3-(imidazol-4-yl)-2-oxopropyl phosphate + L-glutamate. Its pathway is amino-acid biosynthesis; L-histidine biosynthesis; L-histidine from 5-phospho-alpha-D-ribose 1-diphosphate: step 7/9. This Clostridium acetobutylicum (strain ATCC 824 / DSM 792 / JCM 1419 / IAM 19013 / LMG 5710 / NBRC 13948 / NRRL B-527 / VKM B-1787 / 2291 / W) protein is Histidinol-phosphate aminotransferase.